A 64-amino-acid polypeptide reads, in one-letter code: Large ribosomal subunit protein bL32 (64 aa).

It belongs to the bacterial ribosomal protein bL32 family.

This chain is Large ribosomal subunit protein bL32, found in Flavobacterium johnsoniae (strain ATCC 17061 / DSM 2064 / JCM 8514 / BCRC 14874 / CCUG 350202 / NBRC 14942 / NCIMB 11054 / UW101) (Cytophaga johnsonae).